Reading from the N-terminus, the 289-residue chain is Rhodopsin (289 aa).

Over Tyr-1 to Ala-7 the chain is Extracellular. The helical transmembrane segment at Tyr-8–Val-32 threads the bilayer. Residues Thr-33–Asn-44 are Cytoplasmic-facing. A helical membrane pass occupies residues Tyr-45–Tyr-67. Over Thr-68–Cys-81 the chain is Extracellular. Cys-81 and Cys-158 are oxidised to a cystine. Residues Asn-82–Ile-104 form a helical membrane-spanning segment. Residues Glu-105 to Trp-107 carry the 'Ionic lock' involved in activated form stabilization motif. Topologically, residues Glu-105–His-123 are cytoplasmic. The chain crosses the membrane as a helical span at residues Ala-124–Val-144. Residues Gly-145–Ser-173 are Extracellular-facing. The helical transmembrane segment at Phe-174–Gly-195 threads the bilayer. At Arg-196 to Arg-223 the chain is on the cytoplasmic side. Residues Met-224 to Trp-245 traverse the membrane as a helical segment. The Extracellular portion of the chain corresponds to Ile-246–Val-257. The helical transmembrane segment at Phe-258–Cys-279 threads the bilayer. Residue Lys-267 is modified to N6-(retinylidene)lysine. Residues Met-280–Ile-289 are Cytoplasmic-facing.

Belongs to the G-protein coupled receptor 1 family. Opsin subfamily. Phosphorylated on some or all of the serine and threonine residues present in the C-terminal region. In terms of processing, contains one covalently linked retinal chromophore.

The protein resides in the membrane. The protein localises to the cell projection. It localises to the cilium. It is found in the photoreceptor outer segment. Photoreceptor required for image-forming vision at low light intensity. While most salt water fish species use retinal as chromophore, most freshwater fish use 3-dehydroretinal, or a mixture of retinal and 3-dehydroretinal. Light-induced isomerization of 11-cis to all-trans retinal triggers a conformational change that activates signaling via G-proteins. Subsequent receptor phosphorylation mediates displacement of the bound G-protein alpha subunit by arrestin and terminates signaling. This is Rhodopsin (rho) from Comephorus dybowskii.